Reading from the N-terminus, the 417-residue chain is Succinate--CoA ligase [ADP-forming] subunit beta, mitochondrial (417 aa).

Residues Met1–Leu24 constitute a mitochondrion transit peptide. Residues Ala32 to Ala275 enclose the ATP-grasp domain. Residues Lys71, Gly78–Gly80, and Glu138 each bind ATP. Mg(2+) is bound by residues Asn230 and Asp244. Residues Asn295 and Gly352–Met354 contribute to the substrate site.

Belongs to the succinate/malate CoA ligase beta subunit family. In terms of assembly, heterodimer of an alpha and a beta subunit. Mg(2+) serves as cofactor. In terms of tissue distribution, expressed in roots, stems, flowers, leaves and fruits.

The protein localises to the mitochondrion. It catalyses the reaction succinate + ATP + CoA = succinyl-CoA + ADP + phosphate. Its pathway is carbohydrate metabolism; tricarboxylic acid cycle; succinate from succinyl-CoA (ligase route): step 1/1. Its function is as follows. Succinyl-CoA synthetase functions in the citric acid cycle (TCA), coupling the hydrolysis of succinyl-CoA to the synthesis of ATP and thus represents the only step of substrate-level phosphorylation in the TCA. The beta subunit provides nucleotide specificity of the enzyme and binds the substrate succinate, while the binding sites for coenzyme A and phosphate are found in the alpha subunit. This chain is Succinate--CoA ligase [ADP-forming] subunit beta, mitochondrial, found in Solanum lycopersicum (Tomato).